A 206-amino-acid polypeptide reads, in one-letter code: Tumor protein D54 (206 aa).

Methionine 1 is modified (N-acetylmethionine). Residues 1–14 show a composition bias toward polar residues; the sequence is MDSAGQDINLNSPN. The tract at residues 1-24 is disordered; that stretch reads MDSAGQDINLNSPNKGLLSDSMTD. Residues serine 3, serine 12, serine 19, and serine 21 each carry the phosphoserine modification. Positions 38-82 form a coiled coil; that stretch reads VEGLTEAEEEELRAELTKVEEEIVTLRQVLAAKERHCGELKRRLG. Phosphoserine is present on residues serine 96, serine 149, and serine 161. Threonine 163 carries the phosphothreonine modification. Position 166 is a phosphoserine (serine 166). Threonine 173 bears the Phosphothreonine mark. Residues 175–185 show a composition bias toward basic and acidic residues; the sequence is KSKVVGDRENG. Residues 175–206 are disordered; it reads KSKVVGDRENGSDNLPSSAGSGDKPLSDPAPF. A phosphoserine mark is found at serine 192 and serine 195.

Belongs to the TPD52 family. In terms of assembly, forms a homodimer or heterodimer with other members of the family. Interacts with MAL2.

This Homo sapiens (Human) protein is Tumor protein D54 (TPD52L2).